The chain runs to 305 residues: UDP-3-O-acyl-N-acetylglucosamine deacetylase (305 aa).

Positions 78, 237, and 241 each coordinate Zn(2+). The active-site Proton donor is the His264.

This sequence belongs to the LpxC family. Requires Zn(2+) as cofactor.

The enzyme catalyses a UDP-3-O-[(3R)-3-hydroxyacyl]-N-acetyl-alpha-D-glucosamine + H2O = a UDP-3-O-[(3R)-3-hydroxyacyl]-alpha-D-glucosamine + acetate. It participates in glycolipid biosynthesis; lipid IV(A) biosynthesis; lipid IV(A) from (3R)-3-hydroxytetradecanoyl-[acyl-carrier-protein] and UDP-N-acetyl-alpha-D-glucosamine: step 2/6. Functionally, catalyzes the hydrolysis of UDP-3-O-myristoyl-N-acetylglucosamine to form UDP-3-O-myristoylglucosamine and acetate, the committed step in lipid A biosynthesis. In Burkholderia pseudomallei (strain 668), this protein is UDP-3-O-acyl-N-acetylglucosamine deacetylase.